A 397-amino-acid polypeptide reads, in one-letter code: Succinate--CoA ligase [ADP-forming] subunit beta (397 aa).

The 246-residue stretch at 9–254 folds into the ATP-grasp domain; the sequence is KALLRSYGAP…ETEEDPKELA (246 aa). ATP contacts are provided by residues lysine 46, 53-55, glutamate 109, serine 112, and glutamate 117; that span reads GRG. 2 residues coordinate Mg(2+): asparagine 209 and aspartate 223. Substrate contacts are provided by residues asparagine 274 and 331–333; that span reads GIM.

It belongs to the succinate/malate CoA ligase beta subunit family. Heterotetramer of two alpha and two beta subunits. Mg(2+) is required as a cofactor.

The enzyme catalyses succinate + ATP + CoA = succinyl-CoA + ADP + phosphate. It catalyses the reaction GTP + succinate + CoA = succinyl-CoA + GDP + phosphate. It participates in carbohydrate metabolism; tricarboxylic acid cycle; succinate from succinyl-CoA (ligase route): step 1/1. In terms of biological role, succinyl-CoA synthetase functions in the citric acid cycle (TCA), coupling the hydrolysis of succinyl-CoA to the synthesis of either ATP or GTP and thus represents the only step of substrate-level phosphorylation in the TCA. The beta subunit provides nucleotide specificity of the enzyme and binds the substrate succinate, while the binding sites for coenzyme A and phosphate are found in the alpha subunit. This Cereibacter sphaeroides (strain ATCC 17029 / ATH 2.4.9) (Rhodobacter sphaeroides) protein is Succinate--CoA ligase [ADP-forming] subunit beta.